The sequence spans 606 residues: NADH-ubiquinone oxidoreductase chain 5 (606 aa).

Transmembrane regions (helical) follow at residues 4 to 24 (FPSLMLTSLLMLTLPIITTTI), 38 to 58 (NIISYAFITSLIPTMMFIHSG), 87 to 107 (MIFVPVALFVTWSIMEFSMWY), 114 to 134 (ITQFFKYLLMFLITMMILVTA), 140 to 160 (LFIGWEGVGIMSFLLISWWYG), 171 to 191 (AILYNRIGDIGFIMSMAWFLF), 213 to 233 (LMGLLLAATGKSAQFGLHPWL), 241 to 261 (TPVSALLHSSTMVVAGVFLLI), 273 to 293 (VQTFTLCLGAITTLFTAICAL), 301 to 320 (IIAFSTSSQLGLMIVTIGIN), 325 to 347 (AFLHICTHAFFKAMLFMCSGSII), 366 to 386 (MPFTSTSLIIGSLALTGMPFL), 409 to 429 (LLITLIATSLTAAYSTRMIFF), 457 to 477 (LLIGSIFAGFFISNNIYPTTI), 488 to 508 (LTALAVTILGFMMALELSLAT), and 583 to 603 (LIKLYFLSFLVTLTLSLLLLM).

Belongs to the complex I subunit 5 family. In terms of assembly, core subunit of respiratory chain NADH dehydrogenase (Complex I) which is composed of 45 different subunits.

It localises to the mitochondrion inner membrane. It carries out the reaction a ubiquinone + NADH + 5 H(+)(in) = a ubiquinol + NAD(+) + 4 H(+)(out). Functionally, core subunit of the mitochondrial membrane respiratory chain NADH dehydrogenase (Complex I) which catalyzes electron transfer from NADH through the respiratory chain, using ubiquinone as an electron acceptor. Essential for the catalytic activity and assembly of complex I. In Ceratotherium simum (White rhinoceros), this protein is NADH-ubiquinone oxidoreductase chain 5 (MT-ND5).